A 96-amino-acid chain; its full sequence is MLPEEIIKRPIITEKSMSMIPQKKYTFEVDRRANKIEIKKAVEQLFGVEVEKVWTMNVKPKRKRVGRFEGRTKAWKKAIVKLTDRSKTIEFFDSLI.

Belongs to the universal ribosomal protein uL23 family. In terms of assembly, part of the 50S ribosomal subunit. Contacts protein L29, and trigger factor when it is bound to the ribosome.

One of the early assembly proteins it binds 23S rRNA. One of the proteins that surrounds the polypeptide exit tunnel on the outside of the ribosome. Forms the main docking site for trigger factor binding to the ribosome. This chain is Large ribosomal subunit protein uL23, found in Caldicellulosiruptor bescii (strain ATCC BAA-1888 / DSM 6725 / KCTC 15123 / Z-1320) (Anaerocellum thermophilum).